Reading from the N-terminus, the 247-residue chain is 6-carboxyhexanoate--CoA ligase (247 aa).

It belongs to the BioW family. In terms of assembly, homodimer. Mg(2+) is required as a cofactor.

The catalysed reaction is heptanedioate + ATP + CoA = 6-carboxyhexanoyl-CoA + AMP + diphosphate. It participates in metabolic intermediate metabolism; pimeloyl-CoA biosynthesis; pimeloyl-CoA from pimelate: step 1/1. Its function is as follows. Catalyzes the transformation of pimelate into pimeloyl-CoA with concomitant hydrolysis of ATP to AMP. The protein is 6-carboxyhexanoate--CoA ligase of Persephonella marina (strain DSM 14350 / EX-H1).